The following is a 694-amino-acid chain: MSGAIASSPAATLFLAGSSSSSPRRRRSRVSGVWWHLYGGTGLRLHWERRGLVRDGAVVCSASAAGGEDGVAKAKTKSAGSSKAVAVQGSTAKADHVEDSVSSPKYVKPAVAKQNGEVVSRATKSDAPVSKPKVDPSVPASKAEADGNAQAVESKAALDKKEDVGVAEPLEAKADAGGDAGAVSSADDSENKESGPLAGPNVMNVIVVASECSPFCKTGGLGDVVGALPKALARRGHRVMVVIPRYGEYAEAKDLGVRKRYRVAGQDSEVSYFHAFIDGVDFVFLEAPPFRHRHNDIYGGERFDVLKRMILFCKAAVEVPWFAPCGGSIYGDGNLVFIANDWHTALLPVYLKAYYRDNGLMQYTRSVLVIHNIAHQGRGPVDDFATMDLPEHYIDHFRLYDPVGGEHSNVFAAGLKMADRAVTVSHGYLWEIKTMDGGWGLHEIINHNDWKLQGIVNGIDMAEWNPEVDEHLQSDGYANYTFETLDTGKKQCKEALQRQLGLQVRDDVPLIGFIGRLDHQKGVDIIGDAMPWIAGQDVQVVMLGTGRPDLEEMLRRFESEHNDKVRGWVGFSVQLAHRITAGADVLLMPSRFEPCGLNQLYAMAYGTVPVVHAVGGLRDTVAPFDPFADTGLGWTFDRAEANRMIDALGHCLNTYRNYKESWRGLQARGMAQDLSWDHAAELYEDVLVKAKYQW.

A chloroplast-targeting transit peptide spans 1 to 15 (MSGAIASSPAATLFL). Positions 93–197 (KADHVEDSVS…DSENKESGPL (105 aa)) are disordered. A compositionally biased stretch (low complexity) spans 127–142 (APVSKPKVDPSVPASK). Residues 156–176 (AALDKKEDVGVAEPLEAKADA) are compositionally biased toward basic and acidic residues. Residues 177–186 (GGDAGAVSSA) are compositionally biased toward low complexity. Residue Lys-217 coordinates ADP-alpha-D-glucose.

The protein belongs to the glycosyltransferase 1 family. Bacterial/plant glycogen synthase subfamily. In terms of tissue distribution, expressed in leaves and weakly in endosperm and roots.

It is found in the plastid. The protein localises to the amyloplast. It localises to the chloroplast. The enzyme catalyses [(1-&gt;4)-alpha-D-glucosyl](n) + ADP-alpha-D-glucose = [(1-&gt;4)-alpha-D-glucosyl](n+1) + ADP + H(+). The protein operates within glycan biosynthesis; starch biosynthesis. May contribute to the deposition of transient starch in chloroplasts of leaves. In Oryza sativa subsp. japonica (Rice), this protein is Soluble starch synthase 2-2, chloroplastic/amyloplastic (SSII-2).